A 341-amino-acid chain; its full sequence is Phosphate acyltransferase (341 aa).

Belongs to the PlsX family. As to quaternary structure, homodimer. Probably interacts with PlsY.

The protein localises to the cytoplasm. The catalysed reaction is a fatty acyl-[ACP] + phosphate = an acyl phosphate + holo-[ACP]. It functions in the pathway lipid metabolism; phospholipid metabolism. Catalyzes the reversible formation of acyl-phosphate (acyl-PO(4)) from acyl-[acyl-carrier-protein] (acyl-ACP). This enzyme utilizes acyl-ACP as fatty acyl donor, but not acyl-CoA. This is Phosphate acyltransferase from Chlorobaculum parvum (strain DSM 263 / NCIMB 8327) (Chlorobium vibrioforme subsp. thiosulfatophilum).